We begin with the raw amino-acid sequence, 1196 residues long: Tubulin-specific chaperone D (1196 aa).

HEAT repeat units lie at residues 363-401 (VIEQLLVGLKDKDTVVRWSAAKGIGRMAGRLPRELADDV), 599-634 (YIAMHVFPALLLMTQSPDLHTRHGAILACAEVTYAL), 752-788 (SSIAKELIPQYLAELQSPEEMARCGFSSALGALPGFL), and 1106-1142 (GDVRKKILLQLFLLLGHPFPVIRKSTASQVYEMVLTY).

It belongs to the TBCD family. Found in a complex with at least ARL2, PPP2CB, PPP2R1A, PPP2R2A, PPP2R5E and TBCD. Interacts with PPP2CB. Part of a supercomplex made of cofactors A to E. Cofactors A and D function by capturing and stabilizing tubulin in a quasi-native conformation. Cofactor E binds to the cofactor D-tubulin complex; interaction with cofactor C then causes the release of tubulin polypeptides that are committed to the native state. Interacts with ARL2; interaction is enhanced with the GDP-bound form of ARL2. Does not interact with ARL3, ARL4A and ARL4D. Interacts with beta tubulin. Interacts with TBCE.

It localises to the cell junction. The protein localises to the tight junction. It is found in the lateral cell membrane. The protein resides in the cytoplasm. Its subcellular location is the adherens junction. It localises to the cytoskeleton. The protein localises to the microtubule organizing center. It is found in the centrosome. In terms of biological role, tubulin-folding protein implicated in the first step of the tubulin folding pathway and required for tubulin complex assembly. Involved in the regulation of microtubule polymerization or depolymerization, it modulates microtubule dynamics by capturing GTP-bound beta-tubulin (TUBB). Its ability to interact with beta tubulin is regulated via its interaction with ARL2. Acts as a GTPase-activating protein (GAP) for ARL2. Induces microtubule disruption in absence of ARL2. Increases degradation of beta tubulin, when overexpressed in polarized cells. Promotes epithelial cell detachment, a process antagonized by ARL2. Induces tight adherens and tight junctions disassembly at the lateral cell membrane. Required for correct assembly and maintenance of the mitotic spindle, and proper progression of mitosis. Involved in neuron morphogenesis. The polypeptide is Tubulin-specific chaperone D (Tbcd) (Mus musculus (Mouse)).